The chain runs to 304 residues: Ribosomal protein L11 methyltransferase (304 aa).

The S-adenosyl-L-methionine site is built by T152, G173, D195, and N234.

It belongs to the methyltransferase superfamily. PrmA family.

It localises to the cytoplasm. It catalyses the reaction L-lysyl-[protein] + 3 S-adenosyl-L-methionine = N(6),N(6),N(6)-trimethyl-L-lysyl-[protein] + 3 S-adenosyl-L-homocysteine + 3 H(+). In terms of biological role, methylates ribosomal protein L11. The sequence is that of Ribosomal protein L11 methyltransferase from Cupriavidus metallidurans (strain ATCC 43123 / DSM 2839 / NBRC 102507 / CH34) (Ralstonia metallidurans).